A 423-amino-acid chain; its full sequence is Glutamyl-tRNA reductase (423 aa).

Residues 49 to 52 (TCNR), Ser106, 111 to 113 (EPQ), and Gln117 each bind substrate. The Nucleophile role is filled by Cys50. 186-191 (GAGDTS) provides a ligand contact to NADP(+).

This sequence belongs to the glutamyl-tRNA reductase family. As to quaternary structure, homodimer.

It carries out the reaction (S)-4-amino-5-oxopentanoate + tRNA(Glu) + NADP(+) = L-glutamyl-tRNA(Glu) + NADPH + H(+). The protein operates within porphyrin-containing compound metabolism; protoporphyrin-IX biosynthesis; 5-aminolevulinate from L-glutamyl-tRNA(Glu): step 1/2. Catalyzes the NADPH-dependent reduction of glutamyl-tRNA(Glu) to glutamate 1-semialdehyde (GSA). The sequence is that of Glutamyl-tRNA reductase from Idiomarina loihiensis (strain ATCC BAA-735 / DSM 15497 / L2-TR).